The primary structure comprises 141 residues: Hemoglobin subunit alpha (141 aa).

Positions V1–R141 constitute a Globin domain. A Phosphoserine modification is found at S3. 2 positions are modified to N6-succinyllysine: K7 and K11. K16 bears the N6-acetyllysine; alternate mark. An N6-succinyllysine; alternate modification is found at K16. Y24 is subject to Phosphotyrosine. S35 carries the post-translational modification Phosphoserine. K40 is modified (N6-succinyllysine). S49 bears the Phosphoserine mark. H58 lines the O2 pocket. A heme b-binding site is contributed by H87. S102 is modified (phosphoserine). T108 carries the phosphothreonine modification. Phosphoserine is present on residues S124 and S131. Phosphothreonine is present on residues T134 and T137. A Phosphoserine modification is found at S138.

It belongs to the globin family. As to quaternary structure, heterotetramer of two alpha chains and two beta chains. Red blood cells.

In terms of biological role, involved in oxygen transport from the lung to the various peripheral tissues. Hemopressin acts as an antagonist peptide of the cannabinoid receptor CNR1. Hemopressin-binding efficiently blocks cannabinoid receptor CNR1 and subsequent signaling. In Suncus murinus (Asian house shrew), this protein is Hemoglobin subunit alpha (HBA).